The sequence spans 98 residues: Minor capsid protein P13 (98 aa).

Positions 3-23 (KITPFLIAAVVAVIVLAVWLF) are hydrophobic.

In terms of assembly, interacts with the major capsid protein.

The protein resides in the virion. Functionally, one of the minor capsid proteins that constitute a network internal to the major capsid proteins and outside the lipid membrane. The minor capsid protein P13 does not serve a cross-linking function between neighboring capsomers, it may play a role in the viral capsid assembly. The polypeptide is Minor capsid protein P13 (Chlorella (PBCV-1)).